The chain runs to 513 residues: Protein CYCLOPS (513 aa).

Residues 327-435 are disordered; sequence QIHGGTASGE…ERSRKMAEAK (109 aa). Over residues 334 to 347 the composition is skewed to low complexity; that stretch reads SGEPSQSESSAAAP. Over residues 359–381 the composition is skewed to polar residues; it reads PSNSSQTLCDSSWKQVGESTQNR. A compositionally biased stretch (basic and acidic residues) spans 384-396; it reads GVREQIMDNLKDD. Short sequence motifs (nuclear localization signal) lie at residues 397-401 and 421-424; these read RKRKR and KKRR. Residues 447 to 513 adopt a coiled-coil conformation; the sequence is MQAVMKRCEN…ERLLSETGKI (67 aa).

This sequence belongs to the CYCLOPS family.

It localises to the nucleus. Involved symbiotic signaling. Required for root infection by symbiotic rhizobia, infection thread (IT) formation, and nodule development. Required for symbiosome formation (i.e. the release of the bacteria from the ITs) and subsequent symbiosome development. Involved in arbuscular mycorrhizal (AM) symbiosis. This is Protein CYCLOPS from Pisum sativum (Garden pea).